Here is a 119-residue protein sequence, read N- to C-terminus: Ribosome-binding factor A (119 aa).

Belongs to the RbfA family. In terms of assembly, monomer. Binds 30S ribosomal subunits, but not 50S ribosomal subunits or 70S ribosomes.

The protein resides in the cytoplasm. Its function is as follows. One of several proteins that assist in the late maturation steps of the functional core of the 30S ribosomal subunit. Associates with free 30S ribosomal subunits (but not with 30S subunits that are part of 70S ribosomes or polysomes). Required for efficient processing of 16S rRNA. May interact with the 5'-terminal helix region of 16S rRNA. This Coxiella burnetii (strain CbuG_Q212) (Coxiella burnetii (strain Q212)) protein is Ribosome-binding factor A.